The primary structure comprises 492 residues: Protein adenylyltransferase Fic (492 aa).

A compositionally biased stretch (low complexity) spans 1-18; the sequence is MGTEAEQPSPPAQQQDQE. Residues 1-26 form a disordered region; the sequence is MGTEAEQPSPPAQQQDQENPPLCKAQ. The helical transmembrane segment at 33–55 threads the bilayer; that stretch reads LYRFVLIFVAGSLAAWTFHALSS. TPR repeat units lie at residues 118-151 and 152-186; these read ALGALRMAQDLYLAGKDDKAARLFEHALALAPRH and PEVLLRYGEFLEHNQRNIVLADQYYFQALTISPSN. Positions 243 to 248 match the Inhibitory (S/T)XXXE(G/N) motif motif; the sequence is SVGIEG. Residues Glu247 and 328–331 contribute to the ATP site; that span reads VGGH. Residues 297-432 enclose the Fido domain; the sequence is ITIKDILELH…IRPFVRFIAD (136 aa). His375 is an active-site residue. ATP contacts are provided by residues 379-386, 411-412, and Asn419; these read DGNGRTSR and YY.

It belongs to the fic family. As to quaternary structure, homodimer; homodimerization may regulate adenylyltransferase and phosphodiesterase activities.

It localises to the membrane. It catalyses the reaction L-tyrosyl-[protein] + ATP = O-(5'-adenylyl)-L-tyrosyl-[protein] + diphosphate. It carries out the reaction L-threonyl-[protein] + ATP = 3-O-(5'-adenylyl)-L-threonyl-[protein] + diphosphate. The enzyme catalyses 3-O-(5'-adenylyl)-L-threonyl-[protein] + H2O = L-threonyl-[protein] + AMP + H(+). Its activity is regulated as follows. The side chain of Glu-247 determines which of the two opposing activities (AMPylase or de-AMPylase) will take place. In response to endoplasmic reticulum stress, mediates de-AMPylase activity. Adenylyltransferase activity is inhibited by the inhibitory helix present at the N-terminus: Glu-247 binds ATP and competes with ATP-binding at Arg-386, thereby preventing adenylyltransferase activity. In unstressed cells, disengagement of Glu-247 promotes adenylyltransferase activity. Activation dissociates ATP-binding from Glu-247, allowing ordered binding of the entire ATP moiety with the alpha-phosphate in an orientation that is productive for accepting an incoming target hydroxyl side chain. In terms of biological role, protein that can both mediate the addition of adenosine 5'-monophosphate (AMP) to specific residues of target proteins (AMPylation), and the removal of the same modification from target proteins (de-AMPylation), depending on the context. The side chain of Glu-247 determines which of the two opposing activities (AMPylase or de-AMPylase) will take place. Acts as a key regulator of the unfolded protein response (UPR) by mediating AMPylation or de-AMPylation of Hsc70-3/BiP. In unstressed cells, acts as an adenylyltransferase by mediating AMPylation of Hsc70-3/BiP at 'Thr-518', thereby inactivating it. In response to endoplasmic reticulum stress, acts as a phosphodiesterase by mediating removal of ATP (de-AMPylation) from Hsc70-3/BiP at 'Thr-518', leading to restore HSPA5/BiP activity. This is Protein adenylyltransferase Fic from Drosophila melanogaster (Fruit fly).